Reading from the N-terminus, the 356-residue chain is Cobalt-precorrin-5B C(1)-methyltransferase (356 aa).

It belongs to the CbiD family.

The catalysed reaction is Co-precorrin-5B + S-adenosyl-L-methionine = Co-precorrin-6A + S-adenosyl-L-homocysteine. Its pathway is cofactor biosynthesis; adenosylcobalamin biosynthesis; cob(II)yrinate a,c-diamide from sirohydrochlorin (anaerobic route): step 6/10. Catalyzes the methylation of C-1 in cobalt-precorrin-5B to form cobalt-precorrin-6A. This is Cobalt-precorrin-5B C(1)-methyltransferase from Geobacter sp. (strain M21).